Consider the following 264-residue polypeptide: Myozenin-2 (264 aa).

Residue arginine 53 is modified to Omega-N-methylarginine. The disordered stretch occupies residues 90–135 (GKVDGSNLEGGSQQAPLTPPNTPDPRSPPNPDNIAPGYSGPLKEIP). A Phosphoserine modification is found at serine 101. The span at 106 to 120 (LTPPNTPDPRSPPNP) shows a compositional bias: pro residues. Threonine 107 and threonine 111 each carry phosphothreonine. Serine 116 carries the phosphoserine modification.

Belongs to the myozenin family. Interacts via its C-terminus with spectrin repeats 3 and 4 of ACTN2. Interacts with ACTN1, LDB3, MYOT and PPP3CA.

Its subcellular location is the cytoplasm. It localises to the myofibril. It is found in the sarcomere. The protein resides in the z line. Its function is as follows. Myozenins may serve as intracellular binding proteins involved in linking Z line proteins such as alpha-actinin, gamma-filamin, TCAP/telethonin, LDB3/ZASP and localizing calcineurin signaling to the sarcomere. Plays an important role in the modulation of calcineurin signaling. May play a role in myofibrillogenesis. The protein is Myozenin-2 (MYOZ2) of Pongo abelii (Sumatran orangutan).